The primary structure comprises 108 residues: MIKVSEQQVSFEGELKSLLKTGKVIFGAKRAIKYIKLSKVKMVIVASTLRGDLKQDIMHYAKLSNIPVYEYKGSGWDLGTLCGKPFMISTISIIDEGDSKILDIIKER.

It belongs to the eukaryotic ribosomal protein eL30 family.

The chain is Large ribosomal subunit protein eL30 (rpl30e) from Saccharolobus solfataricus (strain ATCC 35092 / DSM 1617 / JCM 11322 / P2) (Sulfolobus solfataricus).